The chain runs to 205 residues: Protein phosphatase inhibitor 2 family member B (205 aa).

The segment at 1–44 (MAASTASHRPIKGILKNKTSTTSSMVASAEQPRRSVDEELSKKS) is disordered. The residue at position 2 (A2) is an N-acetylalanine. 2 required for binding PPP1CC regions span residues 12-17 (KGILKN) and 43-55 (KSQK…ILAT). Residues 17–26 (NKTSTTSSMV) show a composition bias toward polar residues. Residues 31-44 (QPRRSVDEELSKKS) are compositionally biased toward basic and acidic residues. S44 carries the phosphoserine modification. Phosphothreonine occurs at positions 89 and 92. The segment at 111–142 (EPKYRIQEQESSGEEDSDLSPEEREKKRQFEM) is disordered. S121, S122, S127, and S130 each carry phosphoserine. Positions 121–130 (SSGEEDSDLS) are enriched in acidic residues. Residues 131-142 (PEEREKKRQFEM) show a composition bias toward basic and acidic residues. The interval 147–150 (HYNE) is required for binding PPP1CC catalytic center, displacing metal ions and inhibition of PPP1CC catalytic activity. A disordered region spans residues 163–205 (KDLHDDDEDEEMLETADGESMNTEESNQGSTPSDQQQNKLRSS). Over residues 167 to 179 (DDDEDEEMLETAD) the composition is skewed to acidic residues. Residues 182–205 (SMNTEESNQGSTPSDQQQNKLRSS) show a composition bias toward polar residues.

The protein belongs to the protein phosphatase inhibitor 2 family. As to quaternary structure, interacts with PPP1CC. As to expression, only detected in spermatozoa, both heads and tails.

In terms of biological role, inhibitor of protein-phosphatase 1. This is Protein phosphatase inhibitor 2 family member B from Homo sapiens (Human).